A 230-amino-acid chain; its full sequence is Oxaloacetate tautomerase FAHD1, mitochondrial (230 aa).

The transit peptide at 1–26 directs the protein to the mitochondrion; the sequence is MAAAAAAAAQRLLAASTKIIGVGRNY. The Mg(2+) site is built by Glu-73, Glu-75, and Asp-104.

It belongs to the FAH family. Requires Mg(2+) as cofactor. Mn(2+) is required as a cofactor.

Its subcellular location is the mitochondrion. The enzyme catalyses oxaloacetate = enol-oxaloacetate. Its function is as follows. Tautomerase that converts enol-oxaloacetate, a strong inhibitor of succinate dehydrogenase, to the physiological keto form of oxaloacetate. The polypeptide is Oxaloacetate tautomerase FAHD1, mitochondrial (Oryza sativa subsp. japonica (Rice)).